The primary structure comprises 151 residues: Ribosome maturation factor RimP (151 aa).

The protein belongs to the RimP family.

It is found in the cytoplasm. Required for maturation of 30S ribosomal subunits. The protein is Ribosome maturation factor RimP of Shewanella putrefaciens (strain CN-32 / ATCC BAA-453).